The sequence spans 99 residues: IEVLLGSDDGGLAFVPGNFSVSAGEKITFKNNAGFPHNVVFDEDEIPAGVDVSKISMSEEEYLNGPGETYSVTLSEKGTYTFYCAPHQGAGMVGKVTVN.

Positions 1–99 (IEVLLGSDDG…AGMVGKVTVN (99 aa)) constitute a Plastocyanin-like domain. Cu cation is bound by residues His-37, Cys-84, His-87, and Met-92.

This sequence belongs to the plastocyanin family. Requires Cu(2+) as cofactor.

It is found in the plastid. It localises to the chloroplast thylakoid membrane. Its function is as follows. Participates in electron transfer between P700 and the cytochrome b6-f complex in photosystem I. The polypeptide is Plastocyanin A'/A'' (Nicotiana tabacum (Common tobacco)).